The sequence spans 396 residues: Adenylyltransferase and sulfurtransferase UBA4 (396 aa).

Residues glycine 51, aspartate 72, 79–83, lysine 95, and 139–140 contribute to the ATP site; these read SNLHR and DG. Residues cysteine 180 and cysteine 183 each contribute to the Zn(2+) site. The active-site Glycyl thioester intermediate; for adenylyltransferase activity is the cysteine 197. 2 residues coordinate Zn(2+): cysteine 257 and cysteine 260. The Rhodanese domain maps to 305 to 394; it reads VSTKHILLDV…WAKNVDEKFP (90 aa). Cysteine 355 acts as the Cysteine persulfide intermediate; for sulfurtransferase activity in catalysis.

In the N-terminal section; belongs to the HesA/MoeB/ThiF family. UBA4 subfamily. The cofactor is Zn(2+).

It localises to the cytoplasm. The protein localises to the cytosol. It functions in the pathway tRNA modification; 5-methoxycarbonylmethyl-2-thiouridine-tRNA biosynthesis. Its function is as follows. Plays a central role in 2-thiolation of mcm(5)S(2)U at tRNA wobble positions of cytosolic tRNA(Lys), tRNA(Glu) and tRNA(Gln). Acts by mediating the C-terminal thiocarboxylation of sulfur carrier URM1. Its N-terminus first activates URM1 as acyl-adenylate (-COAMP), then the persulfide sulfur on the catalytic cysteine is transferred to URM1 to form thiocarboxylation (-COSH) of its C-terminus. The reaction probably involves hydrogen sulfide that is generated from the persulfide intermediate and that acts as a nucleophile towards URM1. Subsequently, a transient disulfide bond is formed. Does not use thiosulfate as sulfur donor; NFS1 probably acting as a sulfur donor for thiocarboxylation reactions. Prior mcm(5) tRNA modification by the elongator complex is required for 2-thiolation. May also be involved in protein urmylation. In Yarrowia lipolytica (strain CLIB 122 / E 150) (Yeast), this protein is Adenylyltransferase and sulfurtransferase UBA4.